The chain runs to 285 residues: Bifunctional protein FolD (285 aa).

NADP(+) is bound by residues 163-165, Ser188, and Ala231; that span reads GRS.

Belongs to the tetrahydrofolate dehydrogenase/cyclohydrolase family. Homodimer.

The enzyme catalyses (6R)-5,10-methylene-5,6,7,8-tetrahydrofolate + NADP(+) = (6R)-5,10-methenyltetrahydrofolate + NADPH. It carries out the reaction (6R)-5,10-methenyltetrahydrofolate + H2O = (6R)-10-formyltetrahydrofolate + H(+). It functions in the pathway one-carbon metabolism; tetrahydrofolate interconversion. Functionally, catalyzes the oxidation of 5,10-methylenetetrahydrofolate to 5,10-methenyltetrahydrofolate and then the hydrolysis of 5,10-methenyltetrahydrofolate to 10-formyltetrahydrofolate. The chain is Bifunctional protein FolD from Oenococcus oeni (strain ATCC BAA-331 / PSU-1).